The following is a 122-amino-acid chain: Small ribosomal subunit protein uS13 (122 aa).

A disordered region spans residues 99 to 122 (RGQRTHTNARTRKGPAKAIAGKKK).

This sequence belongs to the universal ribosomal protein uS13 family. Part of the 30S ribosomal subunit. Forms a loose heterodimer with protein S19. Forms two bridges to the 50S subunit in the 70S ribosome.

Functionally, located at the top of the head of the 30S subunit, it contacts several helices of the 16S rRNA. In the 70S ribosome it contacts the 23S rRNA (bridge B1a) and protein L5 of the 50S subunit (bridge B1b), connecting the 2 subunits; these bridges are implicated in subunit movement. Contacts the tRNAs in the A and P-sites. This is Small ribosomal subunit protein uS13 from Parvibaculum lavamentivorans (strain DS-1 / DSM 13023 / NCIMB 13966).